We begin with the raw amino-acid sequence, 219 residues long: Ribose-5-phosphate isomerase A (219 aa).

Residues 28–31 (TGST), 81–84 (DGAD), and 94–97 (KGGG) each bind substrate. E103 (proton acceptor) is an active-site residue. K121 lines the substrate pocket.

It belongs to the ribose 5-phosphate isomerase family. In terms of assembly, homodimer.

The enzyme catalyses aldehydo-D-ribose 5-phosphate = D-ribulose 5-phosphate. It functions in the pathway carbohydrate degradation; pentose phosphate pathway; D-ribose 5-phosphate from D-ribulose 5-phosphate (non-oxidative stage): step 1/1. Its function is as follows. Catalyzes the reversible conversion of ribose-5-phosphate to ribulose 5-phosphate. The polypeptide is Ribose-5-phosphate isomerase A (Photorhabdus laumondii subsp. laumondii (strain DSM 15139 / CIP 105565 / TT01) (Photorhabdus luminescens subsp. laumondii)).